The chain runs to 213 residues: Probable aspartate aminotransferase (213 aa).

Residues Gly47, Trp133, and Asn183 each coordinate L-aspartate.

It belongs to the class-I pyridoxal-phosphate-dependent aminotransferase family. Homodimer. Pyridoxal 5'-phosphate is required as a cofactor.

It localises to the cytoplasm. The enzyme catalyses L-aspartate + 2-oxoglutarate = oxaloacetate + L-glutamate. This chain is Probable aspartate aminotransferase (aspC), found in Streptomyces griseus.